Here is a 95-residue protein sequence, read N- to C-terminus: Aspartyl/glutamyl-tRNA(Asn/Gln) amidotransferase subunit C (95 aa).

Belongs to the GatC family. In terms of assembly, heterotrimer of A, B and C subunits.

The enzyme catalyses L-glutamyl-tRNA(Gln) + L-glutamine + ATP + H2O = L-glutaminyl-tRNA(Gln) + L-glutamate + ADP + phosphate + H(+). It catalyses the reaction L-aspartyl-tRNA(Asn) + L-glutamine + ATP + H2O = L-asparaginyl-tRNA(Asn) + L-glutamate + ADP + phosphate + 2 H(+). Its function is as follows. Allows the formation of correctly charged Asn-tRNA(Asn) or Gln-tRNA(Gln) through the transamidation of misacylated Asp-tRNA(Asn) or Glu-tRNA(Gln) in organisms which lack either or both of asparaginyl-tRNA or glutaminyl-tRNA synthetases. The reaction takes place in the presence of glutamine and ATP through an activated phospho-Asp-tRNA(Asn) or phospho-Glu-tRNA(Gln). The protein is Aspartyl/glutamyl-tRNA(Asn/Gln) amidotransferase subunit C of Methylobacterium nodulans (strain LMG 21967 / CNCM I-2342 / ORS 2060).